We begin with the raw amino-acid sequence, 156 residues long: UPF0266 membrane protein YobD (156 aa).

At Met1–Asp5 the chain is on the periplasmic side. The chain crosses the membrane as a helical span at residues Leu6–Met26. Over Pro27–Arg44 the chain is Cytoplasmic. A helical transmembrane segment spans residues Val45–His65. Gly66 is a topological domain (periplasmic). A helical membrane pass occupies residues Ala67–Ile87. Topologically, residues Arg88–Ile156 are cytoplasmic.

It belongs to the UPF0266 family.

It localises to the cell inner membrane. This is UPF0266 membrane protein YobD (yobD) from Salmonella typhimurium (strain LT2 / SGSC1412 / ATCC 700720).